We begin with the raw amino-acid sequence, 202 residues long: Putative pre-16S rRNA nuclease (202 aa).

Disordered regions lie at residues Met-1–Ile-27 and Gly-170–Arg-202. Positions Gly-9–Asp-20 are enriched in basic and acidic residues.

Belongs to the YqgF nuclease family.

Its subcellular location is the cytoplasm. Could be a nuclease involved in processing of the 5'-end of pre-16S rRNA. This Frankia casuarinae (strain DSM 45818 / CECT 9043 / HFP020203 / CcI3) protein is Putative pre-16S rRNA nuclease.